The chain runs to 215 residues: Large ribosomal subunit protein uL1 (215 aa).

Belongs to the universal ribosomal protein uL1 family. Part of the 50S ribosomal subunit.

Functionally, binds directly to 23S rRNA. Probably involved in E site tRNA release. Its function is as follows. Protein L1 is also a translational repressor protein, it controls the translation of its operon by binding to its mRNA. The sequence is that of Large ribosomal subunit protein uL1 from Archaeoglobus fulgidus (strain ATCC 49558 / DSM 4304 / JCM 9628 / NBRC 100126 / VC-16).